We begin with the raw amino-acid sequence, 303 residues long: Probable serine/threonine-protein kinase FPV212 (303 aa).

A Protein kinase domain is found at 25-303 (WILGKQLGSG…NYESLKQMFL (279 aa)). ATP is bound by residues 31 to 39 (LGSGGFGLV) and Lys54. The active-site Proton acceptor is Asp160.

Belongs to the protein kinase superfamily. Ser/Thr protein kinase family. Poxviruses subfamily.

It carries out the reaction L-seryl-[protein] + ATP = O-phospho-L-seryl-[protein] + ADP + H(+). The enzyme catalyses L-threonyl-[protein] + ATP = O-phospho-L-threonyl-[protein] + ADP + H(+). This Vertebrata (FPV) protein is Probable serine/threonine-protein kinase FPV212.